We begin with the raw amino-acid sequence, 330 residues long: Zinc finger Ran-binding domain-containing protein 2 (330 aa).

Phosphoserine is present on Ser-9. The segment at 9–40 adopts a RanBP2-type 1 zinc-finger fold; that stretch reads SDGDWICPDKKCGNVNFARRTSCNRCGREKTT. Lys-18, Lys-54, and Lys-92 each carry N6-acetyllysine. The RanBP2-type 2 zinc-finger motif lies at 65–94; that stretch reads SANDWQCKTCSNVNWARRSECNMCNTPKYA. Residues 117 to 330 are disordered; the sequence is REESDGEYDE…SGSRSSSKKK (214 aa). Ser-120, Ser-153, Ser-181, Ser-188, and Ser-193 each carry phosphoserine. Over residues 150-163 the composition is skewed to acidic residues; the sequence is DKESEGEEEDEDED. A required for nuclear targeting region spans residues 151–324; that stretch reads KESEGEEEDE…SSGSSHSGSR (174 aa). Positions 196–210 are enriched in basic residues; that stretch reads KKSNRRSRSKSRSSH. 2 stretches are compositionally biased toward low complexity: residues 211–224 and 232–242; these read SRSS…SSSR and RSSSSSQSRSR. Basic residues-rich tracts occupy residues 251–273 and 298–314; these read SRGS…RKRS and RKKR…RHRS. Thr-303 bears the Phosphothreonine mark. Residues Ser-305, Ser-307, and Arg-310 each carry the phosphoserine modification. Positions 315–330 are enriched in low complexity; the sequence is SSGSSHSGSRSSSKKK.

Belongs to the ZRANB2 family. Interacts with the C-terminal half of SNRNP70, the Arg/Ser-rich domain of AKAP17A as well as with U2AF1 and CLK1. Post-translationally, isoform 2 is phosphorylated on Ser-310 upon DNA damage, probably by ATM or ATR.

It is found in the nucleus. Splice factor required for alternative splicing of TRA2B/SFRS10 transcripts. Binds to ssRNA containing the consensus sequence 5'-AGGUAA-3'. May interfere with constitutive 5'-splice site selection. In Homo sapiens (Human), this protein is Zinc finger Ran-binding domain-containing protein 2 (ZRANB2).